The primary structure comprises 376 residues: Lipoyl synthase 1, mitochondrial (376 aa).

Positions 109, 114, 120, 140, 144, 147, and 356 each coordinate [4Fe-4S] cluster. The Radical SAM core domain maps to 125–345 (ETGTATATIM…QTLGMEMGFR (221 aa)).

It belongs to the radical SAM superfamily. Lipoyl synthase family. Requires [4Fe-4S] cluster as cofactor.

The protein resides in the mitochondrion. It catalyses the reaction [[Fe-S] cluster scaffold protein carrying a second [4Fe-4S](2+) cluster] + N(6)-octanoyl-L-lysyl-[protein] + 2 oxidized [2Fe-2S]-[ferredoxin] + 2 S-adenosyl-L-methionine + 4 H(+) = [[Fe-S] cluster scaffold protein] + N(6)-[(R)-dihydrolipoyl]-L-lysyl-[protein] + 4 Fe(3+) + 2 hydrogen sulfide + 2 5'-deoxyadenosine + 2 L-methionine + 2 reduced [2Fe-2S]-[ferredoxin]. It participates in protein modification; protein lipoylation via endogenous pathway; protein N(6)-(lipoyl)lysine from octanoyl-[acyl-carrier-protein]: step 2/2. Its function is as follows. Catalyzes the radical-mediated insertion of two sulfur atoms into the C-6 and C-8 positions of the octanoyl moiety bound to the lipoyl domains of lipoate-dependent enzymes, thereby converting the octanoylated domains into lipoylated derivatives. The sequence is that of Lipoyl synthase 1, mitochondrial from Pisum sativum (Garden pea).